The chain runs to 202 residues: Probable molybdenum cofactor guanylyltransferase (202 aa).

GTP contacts are provided by residues 9–11 (VAG), K22, N50, D77, and D102. Residue D102 coordinates Mg(2+).

This sequence belongs to the MobA family. Requires Mg(2+) as cofactor.

It is found in the cytoplasm. It carries out the reaction Mo-molybdopterin + GTP + H(+) = Mo-molybdopterin guanine dinucleotide + diphosphate. In terms of biological role, transfers a GMP moiety from GTP to Mo-molybdopterin (Mo-MPT) cofactor (Moco or molybdenum cofactor) to form Mo-molybdopterin guanine dinucleotide (Mo-MGD) cofactor. This chain is Probable molybdenum cofactor guanylyltransferase, found in Natronomonas pharaonis (strain ATCC 35678 / DSM 2160 / CIP 103997 / JCM 8858 / NBRC 14720 / NCIMB 2260 / Gabara) (Halobacterium pharaonis).